A 60-amino-acid polypeptide reads, in one-letter code: DNA gyrase inhibitor YacG (60 aa).

Positions 15, 18, 30, and 34 each coordinate Zn(2+).

It belongs to the DNA gyrase inhibitor YacG family. Interacts with GyrB. Requires Zn(2+) as cofactor.

In terms of biological role, inhibits all the catalytic activities of DNA gyrase by preventing its interaction with DNA. Acts by binding directly to the C-terminal domain of GyrB, which probably disrupts DNA binding by the gyrase. The sequence is that of DNA gyrase inhibitor YacG from Nitrobacter hamburgensis (strain DSM 10229 / NCIMB 13809 / X14).